The chain runs to 184 residues: Acireductone dioxygenase 4 (184 aa).

Positions 86, 88, 92, and 131 each coordinate Fe(2+). Ni(2+) is bound by residues His-86, His-88, Glu-92, and His-131.

This sequence belongs to the acireductone dioxygenase (ARD) family. It depends on Fe(2+) as a cofactor. Ni(2+) is required as a cofactor.

Its subcellular location is the cytoplasm. It is found in the nucleus. The enzyme catalyses 1,2-dihydroxy-5-(methylsulfanyl)pent-1-en-3-one + O2 = 4-methylsulfanyl-2-oxobutanoate + formate + 2 H(+). The catalysed reaction is 1,2-dihydroxy-5-(methylsulfanyl)pent-1-en-3-one + O2 = 3-(methylsulfanyl)propanoate + CO + formate + 2 H(+). The protein operates within amino-acid biosynthesis; L-methionine biosynthesis via salvage pathway; L-methionine from S-methyl-5-thio-alpha-D-ribose 1-phosphate: step 5/6. Functionally, catalyzes 2 different reactions between oxygen and the acireductone 1,2-dihydroxy-3-keto-5-methylthiopentene (DHK-MTPene) depending upon the metal bound in the active site. Fe-containing acireductone dioxygenase (Fe-ARD) produces formate and 2-keto-4-methylthiobutyrate (KMTB), the alpha-ketoacid precursor of methionine in the methionine recycle pathway. Ni-containing acireductone dioxygenase (Ni-ARD) produces methylthiopropionate, carbon monoxide and formate, and does not lie on the methionine recycle pathway. In Oryza sativa subsp. japonica (Rice), this protein is Acireductone dioxygenase 4 (ARD4).